Here is a 335-residue protein sequence, read N- to C-terminus: Fructose-1,6-bisphosphatase class 1 (335 aa).

The Mg(2+) site is built by Glu-92, Asp-114, Leu-116, and Asp-117. Substrate-binding positions include 117–120, Asn-210, Tyr-242, and Lys-274; that span reads DGSS. Glu-280 is a binding site for Mg(2+).

Belongs to the FBPase class 1 family. Homotetramer. Mg(2+) serves as cofactor.

The protein localises to the cytoplasm. It catalyses the reaction beta-D-fructose 1,6-bisphosphate + H2O = beta-D-fructose 6-phosphate + phosphate. Its pathway is carbohydrate biosynthesis; gluconeogenesis. The protein is Fructose-1,6-bisphosphatase class 1 of Lawsonia intracellularis (strain PHE/MN1-00).